Here is a 45-residue protein sequence, read N- to C-terminus: SEGSPENRICTNNCAGYKGCNYNCDTNIASYKSVCEGEFDPKCLR.

Disulfide bonds link Cys-10-Cys-24, Cys-14-Cys-35, and Cys-20-Cys-43.

This sequence belongs to the protease inhibitor I20 (potato type II proteinase inhibitor) family.

The protein resides in the secreted. In terms of biological role, inhibits trypsin strongly and chymotrypsin temporarily. The protein is Proteinase inhibitor IIA of Solanum tuberosum (Potato).